A 33-amino-acid polypeptide reads, in one-letter code: AVCVYRTCDKDCKRRGYRSGKCINNACKCYPYA.

3 disulfide bridges follow: Cys-3/Cys-22, Cys-8/Cys-27, and Cys-12/Cys-29.

This sequence belongs to the short scorpion toxin superfamily. Potassium channel inhibitor family. Alpha-KTx 10 subfamily. Expressed by the venom gland.

It is found in the secreted. Its function is as follows. Blocks human voltage-gated potassium channel Kv1.2/KCNA2 (IC(50)=3.6 nM) and Kv1.3/KCNA3 (IC(50)=72 nM). In Centruroides tecomanus (Scorpion), this protein is Potassium channel toxin alpha-KTx 10.4.